The sequence spans 192 residues: Large ribosomal subunit protein bL9 (192 aa).

The tract at residues Asp172 to Ala192 is disordered. The segment covering Phe179–Ala192 has biased composition (acidic residues).

This sequence belongs to the bacterial ribosomal protein bL9 family.

Functionally, binds to the 23S rRNA. This Rhizobium johnstonii (strain DSM 114642 / LMG 32736 / 3841) (Rhizobium leguminosarum bv. viciae) protein is Large ribosomal subunit protein bL9.